We begin with the raw amino-acid sequence, 109 residues long: Large ribosomal subunit protein uL23 (109 aa).

The protein belongs to the universal ribosomal protein uL23 family. Part of the 50S ribosomal subunit. Contacts protein L29, and trigger factor when it is bound to the ribosome.

One of the early assembly proteins it binds 23S rRNA. One of the proteins that surrounds the polypeptide exit tunnel on the outside of the ribosome. Forms the main docking site for trigger factor binding to the ribosome. The chain is Large ribosomal subunit protein uL23 from Aquifex pyrophilus.